We begin with the raw amino-acid sequence, 151 residues long: NADH-quinone oxidoreductase subunit I 2 (151 aa).

4Fe-4S ferredoxin-type domains follow at residues proline 49–glutamate 82 and valine 93–aspartate 122. [4Fe-4S] cluster contacts are provided by cysteine 62, cysteine 65, cysteine 68, cysteine 72, cysteine 102, cysteine 105, cysteine 108, and cysteine 112.

Belongs to the complex I 23 kDa subunit family. In terms of assembly, NDH-1 is composed of 14 different subunits. Subunits NuoA, H, J, K, L, M, N constitute the membrane sector of the complex. It depends on [4Fe-4S] cluster as a cofactor.

Its subcellular location is the cell inner membrane. It carries out the reaction a quinone + NADH + 5 H(+)(in) = a quinol + NAD(+) + 4 H(+)(out). NDH-1 shuttles electrons from NADH, via FMN and iron-sulfur (Fe-S) centers, to quinones in the respiratory chain. The immediate electron acceptor for the enzyme in this species is believed to be ubiquinone. Couples the redox reaction to proton translocation (for every two electrons transferred, four hydrogen ions are translocated across the cytoplasmic membrane), and thus conserves the redox energy in a proton gradient. This chain is NADH-quinone oxidoreductase subunit I 2, found in Solibacter usitatus (strain Ellin6076).